A 622-amino-acid chain; its full sequence is Chaperone protein HscA homolog (622 aa).

The protein belongs to the heat shock protein 70 family.

In terms of biological role, chaperone involved in the maturation of iron-sulfur cluster-containing proteins. Has a low intrinsic ATPase activity which is markedly stimulated by HscB. This Acidovorax ebreus (strain TPSY) (Diaphorobacter sp. (strain TPSY)) protein is Chaperone protein HscA homolog.